The sequence spans 601 residues: DNA ligase (601 aa).

D258 provides a ligand contact to ATP. K260 functions as the N6-AMP-lysine intermediate in the catalytic mechanism. ATP contacts are provided by R265, R280, E310, F350, R427, and K433.

The protein belongs to the ATP-dependent DNA ligase family. Interacts with the PCNA heterotrimer, probably via subunit PCNA3. It depends on a divalent metal cation as a cofactor.

The enzyme catalyses ATP + (deoxyribonucleotide)n-3'-hydroxyl + 5'-phospho-(deoxyribonucleotide)m = (deoxyribonucleotide)n+m + AMP + diphosphate.. Ligase activity stimulated by PCNA heterotrimer. Its function is as follows. DNA ligase that seals nicks in double-stranded DNA during DNA replication, DNA recombination and DNA repair. Interaction with PCNA enhances ligase activity. DNA polymerase I, DNA ligase and the flap endonuclease may be constitutively associated with the PCNA heterotrimer forming a scanning complex able to couple DNA synthesis and Okazaki fragment maturation. This chain is DNA ligase, found in Saccharolobus solfataricus (strain ATCC 35092 / DSM 1617 / JCM 11322 / P2) (Sulfolobus solfataricus).